We begin with the raw amino-acid sequence, 245 residues long: Small ribosomal subunit protein uS2 (245 aa).

This sequence belongs to the universal ribosomal protein uS2 family.

The protein is Small ribosomal subunit protein uS2 of Pseudomonas entomophila (strain L48).